The primary structure comprises 340 residues: 3-isopropylmalate dehydrogenase (340 aa).

Substrate contacts are provided by arginine 88, arginine 98, arginine 122, and aspartate 212. Aspartate 212, aspartate 236, and aspartate 240 together coordinate Mg(2+). 272–284 contributes to the NAD(+) binding site; sequence GSAPDIMGKGIAD.

Belongs to the isocitrate and isopropylmalate dehydrogenases family. LeuB type 2 subfamily. Homodimer. The cofactor is Mg(2+). Mn(2+) serves as cofactor.

The protein localises to the cytoplasm. It catalyses the reaction (2R,3S)-3-isopropylmalate + NAD(+) = 4-methyl-2-oxopentanoate + CO2 + NADH. It participates in amino-acid biosynthesis; L-leucine biosynthesis; L-leucine from 3-methyl-2-oxobutanoate: step 3/4. Functionally, catalyzes the oxidation of 3-carboxy-2-hydroxy-4-methylpentanoate (3-isopropylmalate) to 3-carboxy-4-methyl-2-oxopentanoate. The product decarboxylates to 4-methyl-2 oxopentanoate. The sequence is that of 3-isopropylmalate dehydrogenase from Corynebacterium efficiens (strain DSM 44549 / YS-314 / AJ 12310 / JCM 11189 / NBRC 100395).